Here is a 908-residue protein sequence, read N- to C-terminus: Flap endonuclease GEN homolog 1 (908 aa).

The tract at residues 2-96 (GVNDLWQILE…SKRTQTRYGP (95 aa)) is XPG-N domain. Asp30, Glu75, Glu134, Glu136, Asp155, Asp157, and Asp208 together coordinate Mg(2+). The segment at 122–208 (ECLGMPWVQA…VGLAVLLGCD (87 aa)) is XPG-I domain. Positions 208–383 (DYLPKGVPGV…LLVLLTRYDM (176 aa)) are 5'-3' exonuclease domain. The chromodomain stretch occupies residues 389–463 (GRKTSNQLQP…VYQKQLSETK (75 aa)). Disordered stretches follow at residues 460–482 (SETKGRKQKSMKNKPKGSHLPEA), 629–650 (YESEQGTSDSEGSGRDLQQSNP), 792–834 (RDSS…NKLR), and 853–886 (AEDEENGFSDLGRSPQSFRPCHDKDENSTASWEN). Over residues 465–476 (RKQKSMKNKPKG) the composition is skewed to basic residues. Phosphoserine is present on residues Ser794 and Ser795. Basic and acidic residues predominate over residues 824 to 834 (HVRDSTHNKLR).

The protein belongs to the XPG/RAD2 endonuclease family. GEN subfamily. As to quaternary structure, largely monomeric, dimerizes on the Holliday junction and the first nick occurs upon dimerization at the junction. Mg(2+) serves as cofactor. In terms of tissue distribution, expressed in bone marrow and testis and to a lesser extent in thymus, spleen, brain and colon.

The protein resides in the nucleus. Its function is as follows. Endonuclease which resolves Holliday junctions (HJs) by the introduction of symmetrically related cuts across the junction point, to produce nicked duplex products in which the nicks can be readily ligated. Four-way DNA intermediates, also known as Holliday junctions, are formed during homologous recombination and DNA repair, and their resolution is necessary for proper chromosome segregation. Cleaves HJs by a nick and counter-nick mechanism involving dual coordinated incisions that lead to the formation of ligatable nicked duplex products. Cleavage of the first strand is rate limiting, while second strand cleavage is rapid. Largely monomeric, dimerizes on the HJ and the first nick occurs upon dimerization at the junction. Efficiently cleaves both single and double HJs contained within large recombination intermediates. Exhibits a weak sequence preference for incision between two G residues that reside in a T-rich region of DNA. Also has endonuclease activity on 5'-flap and replication fork (RF) DNA substrates. The polypeptide is Flap endonuclease GEN homolog 1 (Gen1) (Mus musculus (Mouse)).